The chain runs to 305 residues: Urease accessory protein UreD (305 aa).

It belongs to the UreD family. In terms of assembly, ureD, UreF and UreG form a complex that acts as a GTP-hydrolysis-dependent molecular chaperone, activating the urease apoprotein by helping to assemble the nickel containing metallocenter of UreC. The UreE protein probably delivers the nickel.

Its subcellular location is the cytoplasm. Functionally, required for maturation of urease via the functional incorporation of the urease nickel metallocenter. This chain is Urease accessory protein UreD, found in Delftia acidovorans (strain DSM 14801 / SPH-1).